A 190-amino-acid chain; its full sequence is UPF0301 protein Reut_A0705 (190 aa).

The protein belongs to the UPF0301 (AlgH) family.

The polypeptide is UPF0301 protein Reut_A0705 (Cupriavidus pinatubonensis (strain JMP 134 / LMG 1197) (Cupriavidus necator (strain JMP 134))).